The primary structure comprises 354 residues: Uroporphyrinogen decarboxylase (354 aa).

Substrate is bound by residues 27 to 31, F46, D77, Y154, T209, and H327; that span reads RQAGR.

Belongs to the uroporphyrinogen decarboxylase family. As to quaternary structure, homodimer.

The protein resides in the cytoplasm. It carries out the reaction uroporphyrinogen III + 4 H(+) = coproporphyrinogen III + 4 CO2. It participates in porphyrin-containing compound metabolism; protoporphyrin-IX biosynthesis; coproporphyrinogen-III from 5-aminolevulinate: step 4/4. Its function is as follows. Catalyzes the decarboxylation of four acetate groups of uroporphyrinogen-III to yield coproporphyrinogen-III. The chain is Uroporphyrinogen decarboxylase from Escherichia coli O157:H7.